Here is a 532-residue protein sequence, read N- to C-terminus: tRNA-2-methylthio-N(6)-dimethylallyladenosine synthase 2 (532 aa).

The interval 1-21 is disordered; that stretch reads MTSTVAHGAGSAGPADDAEPM. The region spanning 24–140 is the MTTase N-terminal domain; the sequence is RTYQVRTYGC…LPALLDRARH (117 aa). [4Fe-4S] cluster contacts are provided by cysteine 33, cysteine 69, cysteine 103, cysteine 177, cysteine 181, and cysteine 184. The Radical SAM core domain maps to 163 to 399; that stretch reads RESAYAAWVS…VELQEQISLE (237 aa). Residues 402 to 470 enclose the TRAM domain; the sequence is RAIVGQRVEL…PHHLIADGGI (69 aa). Residues 510-532 form a disordered region; sequence TSCGSAGGCGSADGAGSSAGDPQ. Residues 523 to 532 show a composition bias toward low complexity; it reads GAGSSAGDPQ.

This sequence belongs to the methylthiotransferase family. MiaB subfamily. Monomer. [4Fe-4S] cluster serves as cofactor.

The protein localises to the cytoplasm. It catalyses the reaction N(6)-dimethylallyladenosine(37) in tRNA + (sulfur carrier)-SH + AH2 + 2 S-adenosyl-L-methionine = 2-methylsulfanyl-N(6)-dimethylallyladenosine(37) in tRNA + (sulfur carrier)-H + 5'-deoxyadenosine + L-methionine + A + S-adenosyl-L-homocysteine + 2 H(+). Catalyzes the methylthiolation of N6-(dimethylallyl)adenosine (i(6)A), leading to the formation of 2-methylthio-N6-(dimethylallyl)adenosine (ms(2)i(6)A) at position 37 in tRNAs that read codons beginning with uridine. In Mycobacterium marinum (strain ATCC BAA-535 / M), this protein is tRNA-2-methylthio-N(6)-dimethylallyladenosine synthase 2.